We begin with the raw amino-acid sequence, 576 residues long: Probable vesicular glutamate transporter eat-4 (576 aa).

The Cytoplasmic portion of the chain corresponds to 1-69 (MSSWNEAWDR…QTWIGKCRKR (69 aa)). A disordered region spans residues 25 to 46 (AAASATGAAPPQQMQEEGNENP). Positions 36–46 (QQMQEEGNENP) are enriched in polar residues. The chain crosses the membrane as a helical span at residues 70 to 90 (WLLAILANMGFMISFGIRCNF). Residues 91–121 (GAAKTHMYKNYTDPYGKVHMHEFNWTIDELS) lie on the Extracellular side of the membrane. 2 N-linked (GlcNAc...) asparagine glycosylation sites follow: asparagine 100 and asparagine 114. A helical transmembrane segment spans residues 122-142 (VMESSYFYGYLVTQIPAGFLA). Topologically, residues 143–150 (AKFPPNKL) are cytoplasmic. Residues 151–171 (FGFGIGVGAFLNILLPYGFKV) traverse the membrane as a helical segment. The Extracellular portion of the chain corresponds to 172 to 174 (KSD). Residues 175 to 195 (YLVAFIQITQGLVQGVCYPAM) traverse the membrane as a helical segment. At 196–213 (HGVWRYWAPPMERSKLAT) the chain is on the cytoplasmic side. A helical transmembrane segment spans residues 214–234 (TAFTGSYAGAVLGLPLSAFLV). Residues 235-239 (SYVSW) are Extracellular-facing. The helical transmembrane segment at 240–260 (AAPFYLYGVCGVIWAILWFCV) threads the bilayer. Over 261–305 (TFEKPAFHPTISQEEKIFIEDAIGHVSNTHPTIRSIPWKAIVTSK) the chain is Cytoplasmic. The chain crosses the membrane as a helical span at residues 306–325 (PVWAIIVANFARSWTFYLLL). Topologically, residues 326–344 (QNQLTYMKEALGMKIADSG) are extracellular. The helical transmembrane segment at 345-365 (LLAAIPHLVMGCVVLMGGQLA) threads the bilayer. Over 366 to 381 (DYLRSNKILSTTAVRK) the chain is Cytoplasmic. A helical membrane pass occupies residues 382 to 402 (IFNCGGFGGEAAFMLIVAYTT). Residues 403–406 (SDTT) are Extracellular-facing. A helical membrane pass occupies residues 407–427 (AIMALIAAVGMSGFAISGFNV). The Cytoplasmic segment spans residues 428–437 (NHLDIAPRYA). The helical transmembrane segment at 438-458 (AILMGFSNGIGTLAGLTCPFV) threads the bilayer. Over 459–471 (TEAFTAHSKHGWT) the chain is Extracellular. A helical membrane pass occupies residues 472-492 (SVFLLASLIHFTGVTFYAVYA). The Cytoplasmic portion of the chain corresponds to 493-576 (SGELQEWAEP…VVENPHYQQW (84 aa)).

This sequence belongs to the major facilitator superfamily. Sodium/anion cotransporter family. VGLUT subfamily. In terms of tissue distribution, expressed in neurons of the pharynx and the extrapharyngeal nervous system. Highly expressed in male PHC sensory neurons.

It localises to the cell membrane. Its subcellular location is the synapse. In terms of biological role, required for glutamatergic synaptic transmission. In AWB and AWC sensory neurons, required for the detection of preferred food sources, probably via glutamatergic neurotransmission from sensory neurons. Negatively regulates the turning step of male mating behavior. The protein is Probable vesicular glutamate transporter eat-4 of Caenorhabditis elegans.